The primary structure comprises 399 residues: Nitric oxide reductase (399 aa).

The interval 32 to 221 is zinc metallo-hydrolase; it reads HRGTTYNAYL…DEIQKINLAI (190 aa). Fe cation-binding residues include His81, Glu83, Asp85, His148, Asp167, and His228. Residues 255 to 394 form the Flavodoxin-like domain; that stretch reads AVIAYDTMWL…RCYELGRKIA (140 aa).

In the N-terminal section; belongs to the zinc metallo-hydrolase group 3 family. Homodimer. FMN is required as a cofactor. Requires Fe cation as cofactor.

Has nitric oxide reductase activity in combination with Hrb; probably involved in nitrosative stress protection. In Moorella thermoacetica (strain ATCC 39073 / JCM 9320), this protein is Nitric oxide reductase (fprA).